Here is a 284-residue protein sequence, read N- to C-terminus: Ermin (284 aa).

The segment at 1–61 (MTDVPATFTQ…APTKGSQEER (61 aa)) is disordered. Residue Ser73 is modified to Phosphoserine. Residues 108 to 251 (TFREGRQWEK…PTLGKKSDIS (144 aa)) are disordered. 2 stretches are compositionally biased toward basic and acidic residues: residues 126 to 140 (EIRR…QPLK) and 171 to 183 (LHSK…KVWD). Residues 184–200 (EEIDDDDDDNCNDDEDE) are compositionally biased toward acidic residues. A compositionally biased stretch (basic and acidic residues) spans 201-220 (VRVIEFKKKHEEVSQFKEEG). Residues Ser214, Ser226, Ser230, and Ser233 each carry the phosphoserine modification. The span at 225–235 (DSPLSSASSQA) shows a compositional bias: low complexity. Thr237 carries the post-translational modification Phosphothreonine. Residues 265 to 284 (KIRKGNTKQRIDEFESMMHL) are binds actin.

As to quaternary structure, binds actin.

Its subcellular location is the cytoplasm. It localises to the cytoskeleton. Plays a role in cytoskeletal rearrangements during the late wrapping and/or compaction phases of myelinogenesis as well as in maintenance and stability of myelin sheath in the adult. May play an important role in late-stage oligodendroglia maturation, myelin/Ranvier node formation during CNS development, and in the maintenance and plasticity of related structures in the mature CNS. The polypeptide is Ermin (ERMN) (Pongo abelii (Sumatran orangutan)).